The sequence spans 299 residues: ClpXP adapter protein SpxH (299 aa).

This sequence belongs to the SpxH family. In terms of assembly, interacts with Spx. Interacts with SpxO/YuzO.

It is found in the cytoplasm. Its activity is regulated as follows. Irreversible aggregation upon several stress conditions prevents interaction with Spx and therefore leads to Spx stabilization. Inhibited by interaction with SpxO/YuzO. Its function is as follows. Adapter protein required for efficient degradation of Spx by ClpXP under non-stress conditions. Interaction with Spx stabilizes Spx and exposes the C-terminus of Spx for recognition and proteolysis by ClpXP. Is specific for Spx and does not enhance proteolysis by ClpCP protease. Probably binds 2 zinc ions. This chain is ClpXP adapter protein SpxH, found in Bacillus subtilis (strain 168).